The chain runs to 476 residues: Aspartyl/glutamyl-tRNA(Asn/Gln) amidotransferase subunit B (476 aa).

Belongs to the GatB/GatE family. GatB subfamily. In terms of assembly, heterotrimer of A, B and C subunits.

It carries out the reaction L-glutamyl-tRNA(Gln) + L-glutamine + ATP + H2O = L-glutaminyl-tRNA(Gln) + L-glutamate + ADP + phosphate + H(+). It catalyses the reaction L-aspartyl-tRNA(Asn) + L-glutamine + ATP + H2O = L-asparaginyl-tRNA(Asn) + L-glutamate + ADP + phosphate + 2 H(+). Its function is as follows. Allows the formation of correctly charged Asn-tRNA(Asn) or Gln-tRNA(Gln) through the transamidation of misacylated Asp-tRNA(Asn) or Glu-tRNA(Gln) in organisms which lack either or both of asparaginyl-tRNA or glutaminyl-tRNA synthetases. The reaction takes place in the presence of glutamine and ATP through an activated phospho-Asp-tRNA(Asn) or phospho-Glu-tRNA(Gln). In Geobacillus thermodenitrificans (strain NG80-2), this protein is Aspartyl/glutamyl-tRNA(Asn/Gln) amidotransferase subunit B.